The primary structure comprises 455 residues: tRNA modification GTPase MnmE (455 aa).

Residues Arg24, Glu81, and Lys121 each contribute to the (6S)-5-formyl-5,6,7,8-tetrahydrofolate site. A TrmE-type G domain is found at 217–378; that stretch reads GMKVVIAGRP…LREHLKDCMG (162 aa). Position 227 (Asn227) interacts with K(+). Residues 227–232, 246–252, 271–274, and 359–361 each bind GTP; these read NAGKSS, TDIAGTT, DTAG, and SAR. Ser231 contacts Mg(2+). Positions 246, 248, and 251 each coordinate K(+). Thr252 is a binding site for Mg(2+). Lys455 provides a ligand contact to (6S)-5-formyl-5,6,7,8-tetrahydrofolate.

It belongs to the TRAFAC class TrmE-Era-EngA-EngB-Septin-like GTPase superfamily. TrmE GTPase family. In terms of assembly, homodimer. Heterotetramer of two MnmE and two MnmG subunits. It depends on K(+) as a cofactor.

The protein localises to the cytoplasm. Its function is as follows. Exhibits a very high intrinsic GTPase hydrolysis rate. Involved in the addition of a carboxymethylaminomethyl (cmnm) group at the wobble position (U34) of certain tRNAs, forming tRNA-cmnm(5)s(2)U34. The chain is tRNA modification GTPase MnmE from Photobacterium profundum (strain SS9).